The following is a 130-amino-acid chain: NADH-quinone oxidoreductase subunit A (130 aa).

3 helical membrane passes run 17 to 37 (YIFV…MLAL), 74 to 94 (LVGI…PWAV), and 99 to 119 (LGPA…VGFV).

The protein belongs to the complex I subunit 3 family. In terms of assembly, NDH-1 is composed of 14 different subunits. Subunits NuoA, H, J, K, L, M, N constitute the membrane sector of the complex.

The protein resides in the cell inner membrane. The catalysed reaction is a quinone + NADH + 5 H(+)(in) = a quinol + NAD(+) + 4 H(+)(out). Functionally, NDH-1 shuttles electrons from NADH, via FMN and iron-sulfur (Fe-S) centers, to quinones in the respiratory chain. The immediate electron acceptor for the enzyme in this species is believed to be ubiquinone. Couples the redox reaction to proton translocation (for every two electrons transferred, four hydrogen ions are translocated across the cytoplasmic membrane), and thus conserves the redox energy in a proton gradient. The polypeptide is NADH-quinone oxidoreductase subunit A (Neorickettsia sennetsu (strain ATCC VR-367 / Miyayama) (Ehrlichia sennetsu)).